The primary structure comprises 420 residues: RING finger protein 39 (420 aa).

The RING-type zinc-finger motif lies at 88–135; sequence CPLCGGSFEDPVLLACEHSFCRACLARRWGTPPATDTEASPTACPCCG. 2 disordered regions span residues 166–186 and 246–265; these read PGARAGRRRGGRIPTMGCLDP and DRRSVQLAPPGTPAPPDGPK. In terms of domain architecture, B30.2/SPRY spans 210–420; the sequence is DDLPEDYPVV…APLRIVPAES (211 aa).

It localises to the cytoplasm. It carries out the reaction S-ubiquitinyl-[E2 ubiquitin-conjugating enzyme]-L-cysteine + [acceptor protein]-L-lysine = [E2 ubiquitin-conjugating enzyme]-L-cysteine + N(6)-ubiquitinyl-[acceptor protein]-L-lysine.. It functions in the pathway protein modification; protein ubiquitination. Functionally, plays an inhibitory role in anti-RNA viral innate immunity by targeting the adapter DDX3X and promoting its 'Lys-48'-linked polyubiquitination. Alternatively, enhances the cGAS-STING pathway activation by promoting 'Lys-63'-linked ubiquitination of STING1, facilitating the STING1-TBK1 complex formation and STING1 activation. The sequence is that of RING finger protein 39 (RNF39) from Macaca mulatta (Rhesus macaque).